Consider the following 253-residue polypeptide: uncharacterized protein (253 aa).

Polar residues predominate over residues 175–184; sequence NPTQTSPGKP. The interval 175–253 is disordered; the sequence is NPTQTSPGKP…ATENEDRLPS (79 aa). Serine 180 carries the phosphoserine modification. Low complexity-rich tracts occupy residues 185–196 and 203–214; these read STSESSQTDTST and TPTTTRASSYTT. A compositionally biased stretch (polar residues) spans 215-242; the sequence is LVSTSNQVSNEAEASAVETSANQAQNTE.

It belongs to the TRAPP small subunits family. BET3 subfamily.

This is an uncharacterized protein from Schizosaccharomyces pombe (strain 972 / ATCC 24843) (Fission yeast).